The following is a 196-amino-acid chain: Phosphoheptose isomerase (196 aa).

The region spanning 38 to 196 (LIAGYRAGAR…VEHALFAPRQ (159 aa)) is the SIS domain. Position 53–55 (53–55 (NGG)) interacts with substrate. The Zn(2+) site is built by histidine 62 and glutamate 66. Substrate is bound by residues glutamate 66, 95 to 96 (ND), 121 to 123 (STS), serine 126, and glutamine 173. Residues glutamine 173 and histidine 181 each coordinate Zn(2+).

Belongs to the SIS family. GmhA subfamily. It depends on Zn(2+) as a cofactor.

The protein resides in the cytoplasm. The enzyme catalyses 2 D-sedoheptulose 7-phosphate = D-glycero-alpha-D-manno-heptose 7-phosphate + D-glycero-beta-D-manno-heptose 7-phosphate. It functions in the pathway carbohydrate biosynthesis; D-glycero-D-manno-heptose 7-phosphate biosynthesis; D-glycero-alpha-D-manno-heptose 7-phosphate and D-glycero-beta-D-manno-heptose 7-phosphate from sedoheptulose 7-phosphate: step 1/1. In terms of biological role, catalyzes the isomerization of sedoheptulose 7-phosphate in D-glycero-D-manno-heptose 7-phosphate. The chain is Phosphoheptose isomerase from Mycobacterium bovis (strain ATCC BAA-935 / AF2122/97).